The primary structure comprises 288 residues: Bifunctional protein FolD (288 aa).

NADP(+) contacts are provided by residues 166-168 (GAS) and Ile-232.

This sequence belongs to the tetrahydrofolate dehydrogenase/cyclohydrolase family. As to quaternary structure, homodimer.

It catalyses the reaction (6R)-5,10-methylene-5,6,7,8-tetrahydrofolate + NADP(+) = (6R)-5,10-methenyltetrahydrofolate + NADPH. The enzyme catalyses (6R)-5,10-methenyltetrahydrofolate + H2O = (6R)-10-formyltetrahydrofolate + H(+). It functions in the pathway one-carbon metabolism; tetrahydrofolate interconversion. Functionally, catalyzes the oxidation of 5,10-methylenetetrahydrofolate to 5,10-methenyltetrahydrofolate and then the hydrolysis of 5,10-methenyltetrahydrofolate to 10-formyltetrahydrofolate. The protein is Bifunctional protein FolD of Klebsiella pneumoniae (strain 342).